An 883-amino-acid chain; its full sequence is Phosphoenolpyruvate carboxylase (883 aa).

Catalysis depends on residues His138 and Lys546.

It belongs to the PEPCase type 1 family. Mg(2+) is required as a cofactor.

It carries out the reaction oxaloacetate + phosphate = phosphoenolpyruvate + hydrogencarbonate. In terms of biological role, forms oxaloacetate, a four-carbon dicarboxylic acid source for the tricarboxylic acid cycle. The sequence is that of Phosphoenolpyruvate carboxylase from Erwinia tasmaniensis (strain DSM 17950 / CFBP 7177 / CIP 109463 / NCPPB 4357 / Et1/99).